A 362-amino-acid polypeptide reads, in one-letter code: Ferrochelatase (362 aa).

The Fe cation site is built by His-212 and Glu-294.

The protein belongs to the ferrochelatase family.

It localises to the cytoplasm. The enzyme catalyses heme b + 2 H(+) = protoporphyrin IX + Fe(2+). It participates in porphyrin-containing compound metabolism; protoheme biosynthesis; protoheme from protoporphyrin-IX: step 1/1. In terms of biological role, catalyzes the ferrous insertion into protoporphyrin IX. The protein is Ferrochelatase of Leptospira biflexa serovar Patoc (strain Patoc 1 / Ames).